Here is a 239-residue protein sequence, read N- to C-terminus: Protein G1-like8 (239 aa).

Disordered stretches follow at residues 1–35 and 149–239; these read MEGG…RYES and KARG…ATRV. Residues 9–29 are compositionally biased toward low complexity; sequence DAQAQAQPVAQAPPAMQPMQQ. An ALOG domain is found at 32–159; that stretch reads RYESQKRRDW…ARGIPYEKKK (128 aa). The short motif at 157–161 is the Nuclear localization signal element; the sequence is KKKRK. Positions 167–178 are enriched in pro residues; that stretch reads QPPPQPPLPPQH. Composition is skewed to low complexity over residues 179-215 and 223-239; these read QPGA…ATSQ and TTTT…ATRV.

It belongs to the plant homeotic and developmental regulators ALOG protein family.

The protein resides in the nucleus. Probable transcription regulator that acts as a developmental regulator by promoting cell growth in response to light. The chain is Protein G1-like8 from Oryza sativa subsp. indica (Rice).